The following is a 294-amino-acid chain: Ribosomal RNA small subunit methyltransferase A (294 aa).

Residues N33, L35, G60, E81, D106, and N131 each coordinate S-adenosyl-L-methionine.

This sequence belongs to the class I-like SAM-binding methyltransferase superfamily. rRNA adenine N(6)-methyltransferase family. RsmA subfamily.

The protein localises to the cytoplasm. It carries out the reaction adenosine(1518)/adenosine(1519) in 16S rRNA + 4 S-adenosyl-L-methionine = N(6)-dimethyladenosine(1518)/N(6)-dimethyladenosine(1519) in 16S rRNA + 4 S-adenosyl-L-homocysteine + 4 H(+). Its function is as follows. Specifically dimethylates two adjacent adenosines (A1518 and A1519) in the loop of a conserved hairpin near the 3'-end of 16S rRNA in the 30S particle. May play a critical role in biogenesis of 30S subunits. This chain is Ribosomal RNA small subunit methyltransferase A, found in Lactococcus lactis subsp. lactis (strain IL1403) (Streptococcus lactis).